The following is a 197-amino-acid chain: Pyridoxal 5'-phosphate synthase subunit PdxT (197 aa).

53 to 55 (GES) provides a ligand contact to L-glutamine. The active-site Nucleophile is the C85. L-glutamine-binding positions include R114 and 142–143 (IR). Catalysis depends on charge relay system residues H179 and E181.

This sequence belongs to the glutaminase PdxT/SNO family. In the presence of PdxS, forms a dodecamer of heterodimers. Only shows activity in the heterodimer.

It carries out the reaction aldehydo-D-ribose 5-phosphate + D-glyceraldehyde 3-phosphate + L-glutamine = pyridoxal 5'-phosphate + L-glutamate + phosphate + 3 H2O + H(+). It catalyses the reaction L-glutamine + H2O = L-glutamate + NH4(+). It functions in the pathway cofactor biosynthesis; pyridoxal 5'-phosphate biosynthesis. In terms of biological role, catalyzes the hydrolysis of glutamine to glutamate and ammonia as part of the biosynthesis of pyridoxal 5'-phosphate. The resulting ammonia molecule is channeled to the active site of PdxS. The polypeptide is Pyridoxal 5'-phosphate synthase subunit PdxT (Thermococcus kodakarensis (strain ATCC BAA-918 / JCM 12380 / KOD1) (Pyrococcus kodakaraensis (strain KOD1))).